A 576-amino-acid polypeptide reads, in one-letter code: Aspartate--tRNA ligase (576 aa).

An L-aspartate-binding site is contributed by E173. An aspartate region spans residues 197–200 (QLFK). An L-aspartate-binding site is contributed by R219. ATP is bound by residues 219–221 (RDE) and Q228. L-aspartate is bound at residue H438. E470 contacts ATP. Position 477 (R477) interacts with L-aspartate. 522-525 (GLDR) serves as a coordination point for ATP.

The protein belongs to the class-II aminoacyl-tRNA synthetase family. Type 1 subfamily. In terms of assembly, homodimer.

It is found in the cytoplasm. The catalysed reaction is tRNA(Asp) + L-aspartate + ATP = L-aspartyl-tRNA(Asp) + AMP + diphosphate. Functionally, catalyzes the attachment of L-aspartate to tRNA(Asp) in a two-step reaction: L-aspartate is first activated by ATP to form Asp-AMP and then transferred to the acceptor end of tRNA(Asp). The polypeptide is Aspartate--tRNA ligase (Aster yellows witches'-broom phytoplasma (strain AYWB)).